A 264-amino-acid chain; its full sequence is Thiamine pyrophosphokinase 1 (264 aa).

The span at 1-12 (MPLPTMTHSSSF) shows a compositional bias: polar residues. The interval 1–27 (MPLPTMTHSSSFLRLPATSSPHPPPAD) is disordered.

This sequence belongs to the thiamine pyrophosphokinase family.

Its subcellular location is the cytoplasm. It localises to the cytosol. The enzyme catalyses thiamine + ATP = thiamine diphosphate + AMP + H(+). It functions in the pathway cofactor biosynthesis; thiamine diphosphate biosynthesis; thiamine diphosphate from thiamine: step 1/1. Its function is as follows. Catalyzes the phosphorylation of thiamine to thiamine pyrophosphate (TPP). TPP is an active cofactor for enzymes involved in glycolysis and energy production. Plant leaves require high levels of TPP for photosynthesis and carbohydrate metabolism. This Oryza sativa subsp. japonica (Rice) protein is Thiamine pyrophosphokinase 1 (TPK1).